The chain runs to 41 residues: Photosystem II reaction center protein L (41 aa).

A helical transmembrane segment spans residues 20–40; the sequence is LFLGLLLVFVLGILSPATSLT.

This sequence belongs to the PsbL family. In terms of assembly, PSII is composed of 1 copy each of membrane proteins PsbA, PsbB, PsbC, PsbD, PsbE, PsbF, PsbH, PsbI, PsbJ, PsbK, PsbL, PsbM, PsbT, PsbX, PsbY, PsbZ, Psb30/Ycf12, peripheral proteins PsbO, CyanoQ (PsbQ), PsbU, PsbV and a large number of cofactors. It forms dimeric complexes.

The protein resides in the cellular thylakoid membrane. Functionally, one of the components of the core complex of photosystem II (PSII). PSII is a light-driven water:plastoquinone oxidoreductase that uses light energy to abstract electrons from H(2)O, generating O(2) and a proton gradient subsequently used for ATP formation. It consists of a core antenna complex that captures photons, and an electron transfer chain that converts photonic excitation into a charge separation. This subunit is found at the monomer-monomer interface and is required for correct PSII assembly and/or dimerization. This Synechococcus sp. (strain ATCC 27144 / PCC 6301 / SAUG 1402/1) (Anacystis nidulans) protein is Photosystem II reaction center protein L.